The sequence spans 1318 residues: DNA-directed RNA polymerase subunit beta' (1318 aa).

Cys60, Cys62, Cys75, and Cys78 together coordinate Zn(2+). The Mg(2+) site is built by Asp535, Asp537, and Asp539. Cys890, Cys967, Cys974, and Cys977 together coordinate Zn(2+).

The protein belongs to the RNA polymerase beta' chain family. In terms of assembly, the RNAP catalytic core consists of 2 alpha, 1 beta, 1 beta' and 1 omega subunit. When a sigma factor is associated with the core the holoenzyme is formed, which can initiate transcription. It depends on Mg(2+) as a cofactor. The cofactor is Zn(2+).

The catalysed reaction is RNA(n) + a ribonucleoside 5'-triphosphate = RNA(n+1) + diphosphate. Its function is as follows. DNA-dependent RNA polymerase catalyzes the transcription of DNA into RNA using the four ribonucleoside triphosphates as substrates. The protein is DNA-directed RNA polymerase subunit beta' of Rhodococcus jostii (strain RHA1).